We begin with the raw amino-acid sequence, 416 residues long: Gamma-glutamyl phosphate reductase (416 aa).

It belongs to the gamma-glutamyl phosphate reductase family.

The protein localises to the cytoplasm. It catalyses the reaction L-glutamate 5-semialdehyde + phosphate + NADP(+) = L-glutamyl 5-phosphate + NADPH + H(+). Its pathway is amino-acid biosynthesis; L-proline biosynthesis; L-glutamate 5-semialdehyde from L-glutamate: step 2/2. In terms of biological role, catalyzes the NADPH-dependent reduction of L-glutamate 5-phosphate into L-glutamate 5-semialdehyde and phosphate. The product spontaneously undergoes cyclization to form 1-pyrroline-5-carboxylate. The protein is Gamma-glutamyl phosphate reductase of Leptospira interrogans serogroup Icterohaemorrhagiae serovar Lai (strain 56601).